Here is an 8545-residue protein sequence, read N- to C-terminus: Nuclear anchorage protein 1 (8545 aa).

The segment at 1–325 (MSSSPPARPC…VITYVSQFVR (325 aa)) is actin-binding. The Cytoplasmic segment spans residues 1–8494 (MSSSPPARPC…QRSRWRRVLR (8494 aa)). Residues 23 to 130 (KAQKNTFTRW…LIWQIILHFQ (108 aa)) enclose the Calponin-homology (CH) 1 domain. The interval 148–197 (TEEPTSSAQPEVVVTAPSPTPSSKKSHSKVSSLSGSKTSLASGEKAPSSP) is disordered. Over residues 159-190 (VVVTAPSPTPSSKKSHSKVSSLSGSKTSLASG) the composition is skewed to low complexity. Positions 222–328 (QSVEQVFLRW…YVSQFVRMFG (107 aa)) constitute a Calponin-homology (CH) 2 domain. Coiled coils occupy residues 754–774 (NIRDKLIELERLNEIYDNHSR), 1072–1101 (SFFQLEFDRLNEKLNMLIHDKDKLRELMVH), 1215–1236 (ADILRMKDEKKRDEKTIDEIQA), 1324–1384 (DTKK…QFED), 1574–1629 (RSIE…DLVK), 1725–1754 (ENRNDLEEVKRLAAEIDRAIDTASSMYEDA), 1950–1981 (PAIIESLDKIKDQINNARDNINRQIDNLNYNQ), 2103–2580 (DNIE…KKSD), 2682–2712 (SVKETLDKLKQAKEEDDKLAGVYDELEKIAK), 2852–2949 (IMQE…NIGK), 3002–3119 (DQIV…KTVV), 3178–3295 (DDEK…DEFK), 3346–3417 (QLQH…PEND), 3482–3552 (DELI…EKSL), 3587–3703 (KAEE…ELLD), 3781–3839 (ALKA…KEQL), 3902–4022 (AAHD…KTVV), 4114–4198 (LDVA…DEFK), and 4249–4320 (QLQH…PEND). Residues 3010-3019 (EAEDVTAKES) show a composition bias toward basic and acidic residues. Residues 3010–3033 (EAEDVTAKESAKKKKKDKKKSPQE) are disordered. Repeat copies occupy residues 3241–4143 (QVAK…KIDP), 4144–5097 (QVAK…KIDP), 5098–6000 (QVAK…KIDP), 6001–6903 (QVAK…KIDP), 6904–7806 (QVAK…KIDP), and 7807–8199 (QVAK…EERA). The 6 X tandem repeat stretch occupies residues 3241 to 8199 (QVAKDIKDSK…TLIPDLEERA (4959 aa)). Basic and acidic residues predominate over residues 3913 to 3922 (EAEDVTAKES). A disordered region spans residues 3913-3936 (EAEDVTAKESAKKKKKDKKKSPQE). A compositionally biased stretch (basic and acidic residues) spans 4372 to 4393 (ITREDGGDDNKSPDELIDDRGR). The tract at residues 4372-4395 (ITREDGGDDNKSPDELIDDRGRST) is disordered. 28 coiled-coil regions span residues 4436–4506 (DELI…EKSL), 4541–4657 (KAEE…ELLD), 4735–4793 (ALKA…KEQL), 4856–4976 (AAHD…KTVV), 5035–5152 (DDEK…DEFK), 5203–5274 (QLQH…PEND), 5339–5409 (DELI…EKSL), 5444–5560 (KAEE…ELLD), 5638–5696 (ALKA…KEQL), 5759–5879 (AAHD…KTVV), 5938–6055 (DDEK…DEFK), 6106–6177 (QLQH…PEND), 6242–6312 (DELI…EKSL), 6347–6463 (KAEE…ELLD), 6541–6599 (ALKA…KEQL), 6662–6782 (AAHD…KTVV), 6841–6958 (DDEK…DEFK), 7009–7080 (QLQH…PEND), 7145–7215 (DELI…EKSL), 7250–7366 (KAEE…ELLD), 7444–7502 (ALKA…KEQL), 7565–7685 (AAHD…KTVV), 7744–7861 (DDEK…DEFK), 7912–7983 (QLQH…PEND), 8048–8118 (DELI…EKSL), 8153–8204 (KAEE…IWER), 8273–8329 (VAED…DINN), and 8370–8390 (STSIDLDQLLAEAKRLLKEIE). Positions 4867–4876 (EAEDVTAKES) are enriched in basic and acidic residues. Residues 4867–4890 (EAEDVTAKESAKKKKKDKKKSPQE) are disordered. The span at 5770–5779 (EAEDVTAKES) shows a compositional bias: basic and acidic residues. The disordered stretch occupies residues 5770–5793 (EAEDVTAKESAKKKKKDKKKSPQE). Residues 6673–6682 (EAEDVTAKES) show a composition bias toward basic and acidic residues. A disordered region spans residues 6673-6696 (EAEDVTAKESAKKKKKDKKKSPQE). Basic and acidic residues predominate over residues 7576–7585 (EAEDVTAKES). The disordered stretch occupies residues 7576–7599 (EAEDVTAKESAKKKKKDKKKSPQE). Disordered stretches follow at residues 8391 to 8418 (PRLQLAQPDHDNEDDEDEEKGSDEKPYD) and 8449 to 8480 (SDSESRSEFDSLDSRSDGLLSPIPDDSTLSEE). The span at 8401 to 8411 (DNEDDEDEEKG) shows a compositional bias: acidic residues. Over residues 8451-8464 (SESRSEFDSLDSRS) the composition is skewed to basic and acidic residues. Residues 8486 to 8545 (RSRWRRVLRTALPLQALLVLLMGAACLVPHCDDEYCCQLLNNFAKSFDPSLEFVNGPPPF) form the KASH domain. Residues 8495 to 8513 (TALPLQALLVLLMGAACLV) form a helical; Anchor for type IV membrane protein membrane-spanning segment. At 8514–8545 (PHCDDEYCCQLLNNFAKSFDPSLEFVNGPPPF) the chain is on the perinuclear space side.

The protein belongs to the nesprin family. Interacts with F-actin via its N-terminal domain. Most likely interacts with unc-84; the interaction is probably required to recruit anc-1 to the nuclear envelope. In terms of tissue distribution, ubiquitously expressed in all postembryonic cells.

The protein localises to the nucleus outer membrane. Its subcellular location is the cytoplasm. It localises to the cytoskeleton. Plays a central role in nuclear and mitochondrial anchoring. Probably connects nuclei to the cytoskeleton by interacting with unc-84 at the nuclear envelope and with F-actin in the cytoplasm, creating a bridge across the nuclear envelope between the cytoskeleton and the nucleus. Has a role in positioning of the cell body of the PVQ lumbar interneuron. In Caenorhabditis elegans, this protein is Nuclear anchorage protein 1.